The following is a 321-amino-acid chain: MALTMTLKEELARVPVAATPERRAETAAMLRFAGGLHLVAGRVVVEAELDHGASVRRLRAAITELYGLAPEIVVVSGGNLRRGQRYVLRVVRGGEDLARQTGLIDQRGRPVRGLAPALVSGTTAATAAVWRGALLAHGSLTEPGRSAALEVTTPGPEAALALVGAARRLHVAAKAREVRQSDRVVVRDGEAIATLLAAVGAEQTATLWRERRERKEVRATANRLANFDDANLRRSAQAAVMAGAKVERALEILGDEVPDHLRYAGRLRLEHKQASLDELGRLADPPMTKDAVAGRIRRLLAMADKRAAERGIPGTDAASEG.

The segment at residues 275–308 (SLDELGRLADPPMTKDAVAGRIRRLLAMADKRAA) is a DNA-binding region (H-T-H motif).

It belongs to the WhiA family.

In terms of biological role, involved in cell division and chromosome segregation. The polypeptide is Probable cell division protein WhiA (Micrococcus luteus (strain ATCC 4698 / DSM 20030 / JCM 1464 / CCM 169 / CCUG 5858 / IAM 1056 / NBRC 3333 / NCIMB 9278 / NCTC 2665 / VKM Ac-2230) (Micrococcus lysodeikticus)).